Consider the following 358-residue polypeptide: Aerobic magnesium-protoporphyrin IX monomethyl ester [oxidative] cyclase (358 aa).

Belongs to the AcsF family. It depends on Fe cation as a cofactor.

It carries out the reaction Mg-protoporphyrin IX 13-monomethyl ester + 3 NADPH + 3 O2 + 2 H(+) = 3,8-divinyl protochlorophyllide a + 3 NADP(+) + 5 H2O. It participates in porphyrin-containing compound metabolism; chlorophyll biosynthesis. In terms of biological role, catalyzes the formation of the isocyclic ring in chlorophyll biosynthesis in aerobic conditions. Mediates the cyclase reaction, which results in the formation of divinylprotochlorophyllide (Pchlide) characteristic of all chlorophylls from magnesium-protoporphyrin IX 13-monomethyl ester (MgPMME). This chain is Aerobic magnesium-protoporphyrin IX monomethyl ester [oxidative] cyclase, found in Rubrivivax gelatinosus (Rhodocyclus gelatinosus).